The chain runs to 321 residues: Chemotaxis protein CheV1 (321 aa).

The CheW-like domain maps to glutamate 19–proline 177. Positions cysteine 198–glutamate 319 constitute a Response regulatory domain. Aspartate 252 is modified (4-aspartylphosphate).

Its function is as follows. Plays an essential role in chemotaxis signal transduction system in order to colonize the host stomach. May act as a phosphate sink to control the flow of phosphate to CheAY. In Helicobacter pylori (strain ATCC 700392 / 26695) (Campylobacter pylori), this protein is Chemotaxis protein CheV1.